A 263-amino-acid polypeptide reads, in one-letter code: Adaptin ear-binding coat-associated protein 2 (263 aa).

Disordered stretches follow at residues 167 to 191 (KKEGAAGAPRTRPASAGGLSLLPPP) and 209 to 263 (GGSL…WVQF). At serine 181 the chain carries Phosphoserine. Short sequence motifs (WXXF motif) lie at residues 218–221 (GSGG) and 238–241 (DIWG). Low complexity predominate over residues 246-263 (STGSPSSQSQPGTGWVQF).

This sequence belongs to the NECAP family. As to quaternary structure, interacts with AP1G1 and AP2A1 components of the adapter protein complexes AP-1 and AP-2. Interacts with the GAE domain proteins GGA1, GGA2 and GGA3. In terms of tissue distribution, expressed in brain, heart, kidney, liver and lung (at protein level).

The protein resides in the cytoplasmic vesicle. It is found in the clathrin-coated vesicle membrane. It localises to the cell membrane. In terms of biological role, involved in endocytosis. This chain is Adaptin ear-binding coat-associated protein 2 (Necap2), found in Rattus norvegicus (Rat).